Consider the following 92-residue polypeptide: uncharacterized protein (92 aa).

This is an uncharacterized protein from Dictyostelium discoideum (Social amoeba).